We begin with the raw amino-acid sequence, 380 residues long: Putative S-(hydroxymethyl)glutathione dehydrogenase 2 (380 aa).

Residue Cys-50 coordinates Zn(2+). Residue His-51 coordinates NAD(+). His-72, Glu-73, Cys-102, Cys-105, Cys-108, Cys-116, and Cys-179 together coordinate Zn(2+). Residues Gly-204 to Gly-209, Asp-228, and Ile-297 to Val-299 each bind NAD(+).

This sequence belongs to the zinc-containing alcohol dehydrogenase family. Class-III subfamily. Zn(2+) serves as cofactor.

The enzyme catalyses a primary alcohol + NAD(+) = an aldehyde + NADH + H(+). It carries out the reaction a secondary alcohol + NAD(+) = a ketone + NADH + H(+). It catalyses the reaction S-(hydroxymethyl)glutathione + NADP(+) = S-formylglutathione + NADPH + H(+). The catalysed reaction is S-(hydroxymethyl)glutathione + NAD(+) = S-formylglutathione + NADH + H(+). The enzyme catalyses S-nitrosoglutathione + NADH + H(+) = S-(hydroxysulfenamide)glutathione + NAD(+). Functionally, oxidizes long-chain alcohols and, in the presence of glutathione, is able to oxidize formaldehyde. Also acts as a S-nitroso-glutathione reductase by catalyzing the NADH-dependent reduction of S-nitrosoglutathione, thereby regulating protein S-nitrosylation. The chain is Putative S-(hydroxymethyl)glutathione dehydrogenase 2 from Schizosaccharomyces pombe (strain 972 / ATCC 24843) (Fission yeast).